The following is a 117-amino-acid chain: Large ribosomal subunit protein uL18 (117 aa).

The protein belongs to the universal ribosomal protein uL18 family. Part of the 50S ribosomal subunit; part of the 5S rRNA/L5/L18/L25 subcomplex. Contacts the 5S and 23S rRNAs.

This is one of the proteins that bind and probably mediate the attachment of the 5S RNA into the large ribosomal subunit, where it forms part of the central protuberance. In Vibrio cholerae serotype O1 (strain ATCC 39541 / Classical Ogawa 395 / O395), this protein is Large ribosomal subunit protein uL18.